Consider the following 301-residue polypeptide: Light-independent protochlorophyllide reductase iron-sulfur ATP-binding protein (301 aa).

The segment covering Met-1–Pro-13 has biased composition (low complexity). The tract at residues Met-1–Val-22 is disordered. Residues Gly-45–Thr-50 and Lys-74 contribute to the ATP site. Residue Ser-49 participates in Mg(2+) binding. [4Fe-4S] cluster is bound by residues Cys-130 and Cys-164. Residues Asn-215 to Arg-216 and Pro-239 to Leu-241 contribute to the ATP site.

This sequence belongs to the NifH/BchL/ChlL family. In terms of assembly, homodimer. Protochlorophyllide reductase is composed of three subunits; BchL, BchN and BchB. It depends on [4Fe-4S] cluster as a cofactor.

The catalysed reaction is chlorophyllide a + oxidized 2[4Fe-4S]-[ferredoxin] + 2 ADP + 2 phosphate = protochlorophyllide a + reduced 2[4Fe-4S]-[ferredoxin] + 2 ATP + 2 H2O. It functions in the pathway porphyrin-containing compound metabolism; bacteriochlorophyll biosynthesis (light-independent). Component of the dark-operative protochlorophyllide reductase (DPOR) that uses Mg-ATP and reduced ferredoxin to reduce ring D of protochlorophyllide (Pchlide) to form chlorophyllide a (Chlide). This reaction is light-independent. The L component serves as a unique electron donor to the NB-component of the complex, and binds Mg-ATP. This Bradyrhizobium sp. (strain ORS 278) protein is Light-independent protochlorophyllide reductase iron-sulfur ATP-binding protein.